A 641-amino-acid polypeptide reads, in one-letter code: XK-related protein 6 (641 aa).

Disordered stretches follow at residues 20–47 (LDEAVGSGGEEDGEPGGGGCGGGGDGSE) and 84–120 (RSAAADGGDQPLQPPAAPGAGRQPPTPSAARPEPPPP). The segment covering 34 to 46 (PGGGGCGGGGDGS) has biased composition (gly residues). Pro residues predominate over residues 107–120 (PPTPSAARPEPPPP). 7 helical membrane passes run 130 to 150 (LWIVLALLVFFGDVGTDLWLA), 159 to 179 (YVYFGLTLFFVLVPSLLVQSL), 318 to 338 (TLPCVSSVTSLMSLAWVLASY), 372 to 392 (VISFALFASIFQLYFGIFVVV), 413 to 433 (WEEILFNMVVGIVYIFCWFNV), 442 to 462 (MFAYYTIVLTENAALTFLWYF), and 473 to 493 (AVPALCCVFISFVAGIAMMLL).

This sequence belongs to the XK family.

The protein resides in the cell membrane. The sequence is that of XK-related protein 6 from Homo sapiens (Human).